The following is a 40-amino-acid chain: Unknown protein from spot 207 of 2D-PAGE of etiolated coleoptile (40 aa).

The protein belongs to the GST superfamily. HSP26 family.

The protein is Unknown protein from spot 207 of 2D-PAGE of etiolated coleoptile of Zea mays (Maize).